Here is a 257-residue protein sequence, read N- to C-terminus: UPF0246 protein Spro_0686 (257 aa).

Belongs to the UPF0246 family.

This Serratia proteamaculans (strain 568) protein is UPF0246 protein Spro_0686.